A 357-amino-acid polypeptide reads, in one-letter code: Malonyl CoA reductase (NADP) (357 aa).

Thr-13–Val-16 is an NADP(+) binding site. Cys-150 acts as the Acyl-thioester intermediate in catalysis. Ser-180–Gly-181 is an NADP(+) binding site. His-245 serves as the catalytic Proton acceptor. An NADP(+)-binding site is contributed by Asn-332–Thr-333.

Belongs to the aspartate-semialdehyde dehydrogenase family. As to quaternary structure, homotetramer.

The enzyme catalyses 3-oxopropanoate + NADP(+) + CoA = malonyl-CoA + NADPH + H(+). Catalyzes the reduction of malonyl-CoA to malonate semialdehyde, a key step in the 3-hydroxypropanoate and the 3-hydroxypropanoate/4-hydroxybutyrate cycles. This is Malonyl CoA reductase (NADP) from Metallosphaera sedula (strain ATCC 51363 / DSM 5348 / JCM 9185 / NBRC 15509 / TH2).